The chain runs to 654 residues: Peptide-N(4)-(N-acetyl-beta-glucosaminyl)asparagine amidase (654 aa).

Ala-2 is modified (N-acetylalanine). In terms of domain architecture, PUB spans 30–91; the sequence is EASKLLLTYA…EGETHLIFPK (62 aa). Residues 112 to 123 show a composition bias toward basic and acidic residues; that stretch reads RLDGSNKSHKVE. The segment at 112-167 is disordered; sequence RLDGSNKSHKVESSQQPAASTQLPTTPSSNPSGLNQHTRNRQGQSPDPPSASTVTP. Over residues 124–167 the composition is skewed to polar residues; that stretch reads SSQQPAASTQLPTTPSSNPSGLNQHTRNRQGQSPDPPSASTVTP. The residue at position 137 (Thr-137) is a Phosphothreonine. The Zn(2+) site is built by Cys-250, Cys-253, Cys-283, and Cys-286. Cys-309 (nucleophile) is an active-site residue. Residues His-336 and Asp-353 contribute to the active site. The region spanning 454 to 654 is the PAW domain; sequence ELGGRISGSV…LEIIIKFSDL (201 aa).

This sequence belongs to the transglutaminase-like superfamily. PNGase family. In terms of assembly, component of a complex required to couple retrotranslocation, ubiquitination and deglycosylation composed of NGLY1, SAKS1, AMFR, VCP and RAD23B. Interacts with the proteasome components RAD23B and PSMC1. Interacts with directly with VCP. Interacts with DERL1, bringing it close to the endoplasmic reticulum membrane. Interacts with SAKS1. Zn(2+) serves as cofactor.

The protein localises to the cytoplasm. It carries out the reaction Hydrolysis of an N(4)-(acetyl-beta-D-glucosaminyl)asparagine residue in which the glucosamine residue may be further glycosylated, to yield a (substituted) N-acetyl-beta-D-glucosaminylamine and a peptide containing an aspartate residue.. Inhibited by Z-VAD-fmk, a well-known caspase inhibitor, which inhibits enzyme activity through covalent binding of the carbohydrate to the single Cys-306 residue. Specifically deglycosylates the denatured form of N-linked glycoproteins in the cytoplasm and assists their proteasome-mediated degradation. Cleaves the beta-aspartyl-glucosamine (GlcNAc) of the glycan and the amide side chain of Asn, converting Asn to Asp. Prefers proteins containing high-mannose over those bearing complex type oligosaccharides. Can recognize misfolded proteins in the endoplasmic reticulum that are exported to the cytosol to be destroyed and deglycosylate them, while it has no activity toward native proteins. Deglycosylation is a prerequisite for subsequent proteasome-mediated degradation of some, but not all, misfolded glycoproteins. The protein is Peptide-N(4)-(N-acetyl-beta-glucosaminyl)asparagine amidase (NGLY1) of Macaca fascicularis (Crab-eating macaque).